Reading from the N-terminus, the 343-residue chain is DNA-directed RNA polymerase subunit alpha (343 aa).

The tract at residues 1-239 is alpha N-terminal domain (alpha-NTD); it reads MGETVTIQKN…DQLNVFVNFE (239 aa). The alpha C-terminal domain (alpha-CTD) stretch occupies residues 255–343; it reads FNPAFLKKVD…ELAKRFEDHY (89 aa).

The protein belongs to the RNA polymerase alpha chain family. In terms of assembly, homodimer. The RNAP catalytic core consists of 2 alpha, 1 beta, 1 beta' and 1 omega subunit. When a sigma factor is associated with the core the holoenzyme is formed, which can initiate transcription.

It carries out the reaction RNA(n) + a ribonucleoside 5'-triphosphate = RNA(n+1) + diphosphate. DNA-dependent RNA polymerase catalyzes the transcription of DNA into RNA using the four ribonucleoside triphosphates as substrates. This Bradyrhizobium diazoefficiens (strain JCM 10833 / BCRC 13528 / IAM 13628 / NBRC 14792 / USDA 110) protein is DNA-directed RNA polymerase subunit alpha.